An 85-amino-acid chain; its full sequence is Small ribosomal subunit protein bS16c (85 aa).

Belongs to the bacterial ribosomal protein bS16 family.

It localises to the plastid. The protein resides in the chloroplast. This is Small ribosomal subunit protein bS16c from Oryza nivara (Indian wild rice).